The sequence spans 170 residues: Large ribosomal subunit protein uL16 (170 aa).

Belongs to the universal ribosomal protein uL16 family.

In Methanoculleus marisnigri (strain ATCC 35101 / DSM 1498 / JR1), this protein is Large ribosomal subunit protein uL16.